Reading from the N-terminus, the 264-residue chain is Thymidylate synthase (264 aa).

Residue Arg21 participates in dUMP binding. His51 lines the (6R)-5,10-methylene-5,6,7,8-tetrahydrofolate pocket. 126 to 127 is a dUMP binding site; it reads RR. The active-site Nucleophile is Cys146. DUMP contacts are provided by residues 166 to 169, Asn177, and 207 to 209; these read RSAD and HIY. Position 169 (Asp169) interacts with (6R)-5,10-methylene-5,6,7,8-tetrahydrofolate. Ala263 lines the (6R)-5,10-methylene-5,6,7,8-tetrahydrofolate pocket.

It belongs to the thymidylate synthase family. Bacterial-type ThyA subfamily. As to quaternary structure, homodimer.

The protein localises to the cytoplasm. The enzyme catalyses dUMP + (6R)-5,10-methylene-5,6,7,8-tetrahydrofolate = 7,8-dihydrofolate + dTMP. It functions in the pathway pyrimidine metabolism; dTTP biosynthesis. Functionally, catalyzes the reductive methylation of 2'-deoxyuridine-5'-monophosphate (dUMP) to 2'-deoxythymidine-5'-monophosphate (dTMP) while utilizing 5,10-methylenetetrahydrofolate (mTHF) as the methyl donor and reductant in the reaction, yielding dihydrofolate (DHF) as a by-product. This enzymatic reaction provides an intracellular de novo source of dTMP, an essential precursor for DNA biosynthesis. The polypeptide is Thymidylate synthase (Cupriavidus metallidurans (strain ATCC 43123 / DSM 2839 / NBRC 102507 / CH34) (Ralstonia metallidurans)).